The following is a 354-amino-acid chain: Methionine import ATP-binding protein MetN (354 aa).

The region spanning 8 to 250 is the ABC transporter domain; sequence LDHIDITFHQ…PREDLTKDFI (243 aa). An ATP-binding site is contributed by 42–49; that stretch reads GYSGAGKS.

The protein belongs to the ABC transporter superfamily. Methionine importer (TC 3.A.1.24) family. In terms of assembly, the complex is composed of two ATP-binding proteins (MetN), two transmembrane proteins (MetI) and a solute-binding protein (MetQ).

The protein resides in the cell membrane. It catalyses the reaction L-methionine(out) + ATP + H2O = L-methionine(in) + ADP + phosphate + H(+). The catalysed reaction is D-methionine(out) + ATP + H2O = D-methionine(in) + ADP + phosphate + H(+). Functionally, part of the ABC transporter complex MetNIQ involved in methionine import. Responsible for energy coupling to the transport system. The protein is Methionine import ATP-binding protein MetN of Streptococcus mutans serotype c (strain ATCC 700610 / UA159).